The primary structure comprises 425 residues: Serine hydroxymethyltransferase (425 aa).

(6S)-5,6,7,8-tetrahydrofolate-binding positions include Leu122 and 126 to 128 (GHL). N6-(pyridoxal phosphate)lysine is present on Lys231. A (6S)-5,6,7,8-tetrahydrofolate-binding site is contributed by 355–357 (SPF).

The protein belongs to the SHMT family. In terms of assembly, homodimer. Requires pyridoxal 5'-phosphate as cofactor.

The protein resides in the cytoplasm. The catalysed reaction is (6R)-5,10-methylene-5,6,7,8-tetrahydrofolate + glycine + H2O = (6S)-5,6,7,8-tetrahydrofolate + L-serine. It functions in the pathway one-carbon metabolism; tetrahydrofolate interconversion. Its pathway is amino-acid biosynthesis; glycine biosynthesis; glycine from L-serine: step 1/1. Catalyzes the reversible interconversion of serine and glycine with tetrahydrofolate (THF) serving as the one-carbon carrier. This reaction serves as the major source of one-carbon groups required for the biosynthesis of purines, thymidylate, methionine, and other important biomolecules. Also exhibits THF-independent aldolase activity toward beta-hydroxyamino acids, producing glycine and aldehydes, via a retro-aldol mechanism. The chain is Serine hydroxymethyltransferase from Rippkaea orientalis (strain PCC 8801 / RF-1) (Cyanothece sp. (strain PCC 8801)).